Reading from the N-terminus, the 353-residue chain is Methylthioribose-1-phosphate isomerase (353 aa).

Substrate-binding positions include 51–53 (RGA), R94, and Q199. D240 acts as the Proton donor in catalysis. 250 to 251 (NK) contributes to the substrate binding site.

Belongs to the EIF-2B alpha/beta/delta subunits family. MtnA subfamily. As to quaternary structure, homodimer.

It carries out the reaction 5-(methylsulfanyl)-alpha-D-ribose 1-phosphate = 5-(methylsulfanyl)-D-ribulose 1-phosphate. The protein operates within amino-acid biosynthesis; L-methionine biosynthesis via salvage pathway; L-methionine from S-methyl-5-thio-alpha-D-ribose 1-phosphate: step 1/6. Functionally, catalyzes the interconversion of methylthioribose-1-phosphate (MTR-1-P) into methylthioribulose-1-phosphate (MTRu-1-P). The protein is Methylthioribose-1-phosphate isomerase of Bacillus cereus (strain ATCC 14579 / DSM 31 / CCUG 7414 / JCM 2152 / NBRC 15305 / NCIMB 9373 / NCTC 2599 / NRRL B-3711).